We begin with the raw amino-acid sequence, 901 residues long: HTH-type transcriptional regulator MalT (901 aa).

39–46 provides a ligand contact to ATP; the sequence is SPAGYGKT. Residues 829 to 894 form the HTH luxR-type domain; sequence ELIRTSPLTQ…DAVQHAQQLL (66 aa). Positions 853–872 form a DNA-binding region, H-T-H motif; the sequence is NEQIAGELAVAATTIKTHIR.

It belongs to the MalT family. Monomer in solution. Oligomerizes to an active state in the presence of the positive effectors ATP and maltotriose.

Activated by ATP and maltotriose, which are both required for DNA binding. In terms of biological role, positively regulates the transcription of the maltose regulon whose gene products are responsible for uptake and catabolism of malto-oligosaccharides. Specifically binds to the promoter region of its target genes, recognizing a short DNA motif called the MalT box. In Salmonella agona (strain SL483), this protein is HTH-type transcriptional regulator MalT.